We begin with the raw amino-acid sequence, 414 residues long: Deoxyuridine 5'-triphosphate nucleotidohydrolase (414 aa).

Residues 327-329 and 409-410 each bind substrate; these read RSS and FG.

This sequence belongs to the dUTPase family. Requires Mg(2+) as cofactor.

The enzyme catalyses dUTP + H2O = dUMP + diphosphate + H(+). In terms of biological role, involved in nucleotide metabolism: produces dUMP, the immediate precursor of thymidine nucleotides and decreases the intracellular concentration of dUTP to avoid uracil incorporation into viral DNA. The protein is Deoxyuridine 5'-triphosphate nucleotidohydrolase of Amazona oratrix (yellow-headed parrot).